The primary structure comprises 148 residues: Ribonuclease pancreatic (148 aa).

Positions 1 to 25 (MGLEKSLILLPLLVLVFGWVQSSLG) are cleaved as a signal peptide. Positions 32 and 35 each coordinate substrate. The Proton acceptor role is filled by H36. Disulfide bonds link C50-C108, C64-C119, C82-C134, and C89-C96. N-linked (GlcNAc...) asparagine glycosylation occurs at N58. Residue 65–69 (KPVNT) coordinates substrate. N-linked (GlcNAc...) asparagine glycosylation occurs at N86. Substrate is bound by residues K90 and R109. Residue H143 is the Proton donor of the active site.

Belongs to the pancreatic ribonuclease family. In terms of assembly, monomer. Interacts with and forms tight 1:1 complexes with RNH1. Dimerization of two such complexes may occur. Interaction with RNH1 inhibits this protein. As to expression, pancreas.

It localises to the secreted. The enzyme catalyses an [RNA] containing cytidine + H2O = an [RNA]-3'-cytidine-3'-phosphate + a 5'-hydroxy-ribonucleotide-3'-[RNA].. It carries out the reaction an [RNA] containing uridine + H2O = an [RNA]-3'-uridine-3'-phosphate + a 5'-hydroxy-ribonucleotide-3'-[RNA].. Functionally, endonuclease that catalyzes the cleavage of RNA on the 3' side of pyrimidine nucleotides. Acts on single-stranded and double-stranded RNA. The protein is Ribonuclease pancreatic (RNASE1) of Chionomys nivalis (European snow vole).